Here is a 108-residue protein sequence, read N- to C-terminus: Parvalbumin beta 2 (108 aa).

The residue at position 2 (Ser-2) is an N-acetylserine. EF-hand domains follow at residues 38 to 73 (KSSDDVKKAFYVIDQDKSGFIEEDELKLFLQNFSAS) and 77 to 108 (LTDAETKAFLADGDKDGDGMIGVDEFAAMIKG). Residues Asp-51, Asp-53, Ser-55, Phe-57, Glu-59, Glu-62, Asp-90, Asp-92, Asp-94, Met-96, and Glu-101 each contribute to the Ca(2+) site.

Belongs to the parvalbumin family.

In terms of biological role, in muscle, parvalbumin is thought to be involved in relaxation after contraction. It binds two calcium ions. The protein is Parvalbumin beta 2 of Salmo salar (Atlantic salmon).